The following is a 463-amino-acid chain: Serine/threonine-protein kinase tricornered (463 aa).

Positions 93–394 (FEALKVIGRG…LEDLKSVPFF (302 aa)) constitute a Protein kinase domain. Residues 99 to 107 (IGRGAFGEV) and Lys-122 contribute to the ATP site. The interval 119-180 (YAMKVLRKAD…EFLPGGDMMT (62 aa)) is interaction with mats and Mob1. Asp-216 (proton acceptor) is an active-site residue. Ser-292 carries the post-translational modification Phosphoserine. In terms of domain architecture, AGC-kinase C-terminal spans 395 to 463 (RGVDWEHIRE…YKRFEVRNLE (69 aa)). Position 453 is a phosphothreonine (Thr-453).

It belongs to the protein kinase superfamily. AGC Ser/Thr protein kinase family. Interacts with, and is activated by, Mob1. The cofactor is Mg(2+). Expressed in the peripheral and central nervous system (at protein level). Expressed in the wing imaginal disk.

It is found in the cytoplasm. Its subcellular location is the nucleus. The enzyme catalyses L-seryl-[protein] + ATP = O-phospho-L-seryl-[protein] + ADP + H(+). It carries out the reaction L-threonyl-[protein] + ATP = O-phospho-L-threonyl-[protein] + ADP + H(+). Its activity is regulated as follows. Activated by fry. Functionally, serine/threonine-protein kinase involved in controlling cell structure and proliferation of a variety of polarized outgrowths including epidermal hairs, bristles, arista laterals, and dendrites. Together with fry, maintains the integrity of epidermal hairs and is an essential component of the signaling pathway regulating dendritic branching of sensory neurons. Reduces neurite outgrowth by phosphorylating pav, thereby inhibiting its function in microtubule-microtubule sliding. The polypeptide is Serine/threonine-protein kinase tricornered (Drosophila melanogaster (Fruit fly)).